A 446-amino-acid polypeptide reads, in one-letter code: Tubulin beta-6 chain (446 aa).

The short motif at 1-4 is the MREI motif element; it reads MREI. Residues Q11, E69, S138, G142, T143, and G144 each coordinate GTP. E69 lines the Mg(2+) pocket. A Phosphoserine; by CDK1 modification is found at S172. 2 residues coordinate GTP: N204 and N226. Residue E438 is modified to 5-glutamyl polyglutamate.

Belongs to the tubulin family. As to quaternary structure, dimer of alpha and beta chains. A typical microtubule is a hollow water-filled tube with an outer diameter of 25 nm and an inner diameter of 15 nM. Alpha-beta heterodimers associate head-to-tail to form protofilaments running lengthwise along the microtubule wall with the beta-tubulin subunit facing the microtubule plus end conferring a structural polarity. Microtubules usually have 13 protofilaments but different protofilament numbers can be found in some organisms and specialized cells. Requires Mg(2+) as cofactor. In terms of processing, some glutamate residues at the C-terminus are polyglycylated, resulting in polyglycine chains on the gamma-carboxyl group. Glycylation is mainly limited to tubulin incorporated into axonemes (cilia and flagella) whereas glutamylation is prevalent in neuronal cells, centrioles, axonemes, and the mitotic spindle. Both modifications can coexist on the same protein on adjacent residues, and lowering polyglycylation levels increases polyglutamylation, and reciprocally. Cilia and flagella glycylation is required for their stability and maintenance. Flagella glycylation controls sperm motility. Post-translationally, some glutamate residues at the C-terminus are polyglutamylated, resulting in polyglutamate chains on the gamma-carboxyl group. Polyglutamylation plays a key role in microtubule severing by spastin (SPAST). SPAST preferentially recognizes and acts on microtubules decorated with short polyglutamate tails: severing activity by SPAST increases as the number of glutamates per tubulin rises from one to eight, but decreases beyond this glutamylation threshold. Glutamylation is also involved in cilia motility. Phosphorylated on Ser-172 by CDK1 during the cell cycle, from metaphase to telophase, but not in interphase. This phosphorylation inhibits tubulin incorporation into microtubules.

It is found in the cytoplasm. Its subcellular location is the cytoskeleton. Its function is as follows. Tubulin is the major constituent of microtubules, a cylinder consisting of laterally associated linear protofilaments composed of alpha- and beta-tubulin heterodimers. Microtubules grow by the addition of GTP-tubulin dimers to the microtubule end, where a stabilizing cap forms. Below the cap, tubulin dimers are in GDP-bound state, owing to GTPase activity of alpha-tubulin. This is Tubulin beta-6 chain (TUBB6) from Bos taurus (Bovine).